Consider the following 92-residue polypeptide: Bombyxin A-7 (92 aa).

The signal sequence occupies residues 1 to 19 (MKLLLAIALMLTIVMWVST). Gln-20 carries the post-translational modification Pyrrolidone carboxylic acid. 3 disulfide bridges follow: Cys-29–Cys-79, Cys-41–Cys-92, and Cys-78–Cys-83. A propeptide spans 50 to 70 (SDAQYASYGSAWLMPYSEGRG) (c peptide like).

This sequence belongs to the insulin family. Heterodimer of a B chain and an A chain linked by two disulfide bonds.

The protein resides in the secreted. Brain peptide responsible for activation of prothoracic glands to produce ecdysone in insects. This chain is Bombyxin A-7 (BBXA7), found in Bombyx mori (Silk moth).